Reading from the N-terminus, the 119-residue chain is Beta-2-microglobulin (119 aa).

A signal peptide spans 1–20; sequence MARSVVVSLFVLLALAGLEA. In terms of domain architecture, Ig-like C1-type spans 25-114; that stretch reads PKIQVYSRHP…VTFQTPKTVK (90 aa).

The protein belongs to the beta-2-microglobulin family. In terms of assembly, heterodimer of an alpha chain and a beta chain. Beta-2-microglobulin is the beta-chain of major histocompatibility complex class I molecules.

It localises to the secreted. Functionally, component of the class I major histocompatibility complex (MHC). Involved in the presentation of peptide antigens to the immune system. This is Beta-2-microglobulin (B2M) from Brachyteles arachnoides (Southern muriqui).